The primary structure comprises 456 residues: Ribonuclease inhibitor (456 aa).

Methionine 1 bears the N-acetylmethionine mark. LRR repeat units follow at residues tryptophan 15 to isoleucine 43, serine 44 to valine 71, leucine 72 to leucine 100, proline 101 to leucine 128, cysteine 129 to leucine 157, alanine 158 to leucine 185, cysteine 186 to leucine 214, cysteine 215 to leucine 242, cysteine 243 to leucine 271, cysteine 272 to leucine 299, cysteine 300 to phenylalanine 328, cysteine 329 to leucine 356, cysteine 357 to leucine 385, alanine 386 to leucine 413, and leucine 414 to leucine 442. Phosphoserine is present on serine 86.

As to quaternary structure, forms high-affinity heterodimers with RNASE1, ANG and RNASE2.

Its subcellular location is the cytoplasm. The protein localises to the nucleus. Functionally, ribonuclease inhibitor which inhibits RNASE1, RNASE2 and angiogenin (ANG). May play a role in redox homeostasis. Required to inhibit the cytotoxic tRNA ribonuclease activity of ANG in the cytoplasm in absence of stress. Relocates to the nucleus in response to stress, relieving inhibition of ANG in the cytoplasm, and inhibiting the angiogenic activity of ANG in the nucleus. This is Ribonuclease inhibitor (Rnh1) from Mus musculus (Mouse).